Reading from the N-terminus, the 515-residue chain is MEELQGYLEKDGSRQQNFLYPLIFQEYIYTLAHDHGLNSSIFYEPMEIVGLGYDNKSSSVLVKRLITRMYQQNSLIYSMNDFNQNRFVGHNNSFYSNLDSQMVSEGFAVIVEIPFSLRLVPSSEEIPKSQNLRSIHSIFPFLEDKLSHLNYVLDILIPYPIHLEILVQILQCWIQDVPSLHFLRLFLHEFHNWNNLITPTKSISVFSKENKRLFRILYNSYVSEYEFVFVFLRKQSYYLRSTSSRAFLERTHFYVKIEHLIDVCHNHFQKILWFFKDSFMHYVRYKGKAILASRGTYLLIKKWKCYLVNFWQYNFHFWSKPYRIHINPFSNYSFYFLGYISSVLINPSAVKNQMLENFYLVDTLTQNSITIVPVIPLIGSLSKAKFCTILGHPISKPIWAELSDSDIIDRFGRICRNLSHYHSGSSKKQSLYRIKYILRLSCARTLARKHKSTVRNLLQRLGSGLLEEFFTEEEQVISPIFPKTTLFPLHGSHKERIWYLDIIRINDLANYLDWS.

The protein belongs to the intron maturase 2 family. MatK subfamily.

It localises to the plastid. It is found in the chloroplast. Usually encoded in the trnK tRNA gene intron. Probably assists in splicing its own and other chloroplast group II introns. The sequence is that of Maturase K from Trillium luteum (Yellow wakerobin).